The following is a 187-amino-acid chain: Tumor necrosis factor ligand superfamily member 4 (187 aa).

At 1–23 the chain is on the cytoplasmic side; the sequence is MEGVRPLEENVGNAPRPRFERNK. A helical; Signal-anchor for type II membrane protein membrane pass occupies residues 24–44; sequence LLLVASVVQALGLLLCLTYVC. Residues 45-187 lie on the Extracellular side of the membrane; that stretch reads QHSHAPEVSL…LQNPGGYCAP (143 aa). One can recognise a THD domain in the interval 58–177; the sequence is PIENIMTQLQ…SVNAGELIVI (120 aa). Disulfide bonds link Cys-74/Cys-164 and Cys-101/Cys-185. Asn-94 and Asn-156 each carry an N-linked (GlcNAc...) asparagine glycan.

This sequence belongs to the tumor necrosis factor family. As to quaternary structure, homotrimer.

The protein resides in the membrane. Functionally, cytokine that binds to TNFRSF4. Co-stimulates T-cell proliferation and cytokine production. The sequence is that of Tumor necrosis factor ligand superfamily member 4 (TNFSF4) from Oryctolagus cuniculus (Rabbit).